Here is an 88-residue protein sequence, read N- to C-terminus: Small ribosomal subunit protein bS16 (88 aa).

Belongs to the bacterial ribosomal protein bS16 family.

This chain is Small ribosomal subunit protein bS16, found in Buchnera aphidicola subsp. Cinara cedri (strain Cc).